A 109-amino-acid chain; its full sequence is Transmembrane protein 233 (109 aa).

Positions Met1–Asp30 are disordered. Over Met1–Thr41 the chain is Cytoplasmic. The segment covering Asn21–Asp30 has biased composition (acidic residues). The helical intramembrane region spans Ile42–Met62. Topologically, residues Ser63–Trp84 are cytoplasmic. A helical membrane pass occupies residues Val85–Phe105. Topologically, residues Thr106–Ala109 are extracellular.

Belongs to the CD225/Dispanin family. As to quaternary structure, interacts with the giant stinging tree toxin ExTxA (AC P0DQP3). Interacts with Nav1.7/SCN9A. Interacts with Nav1.1/SCN1A, Nav1.2/SCN2A, Nav1.3/SCN3A, Nav1.4/SCN4A, Nav1.5/SCN5A, and Nav1.6/SCN8A.

It is found in the cell membrane. In terms of biological role, probable accessory protein of voltage-gated sodium channels. The sequence is that of Transmembrane protein 233 from Homo sapiens (Human).